Here is a 183-residue protein sequence, read N- to C-terminus: 2-epi-5-epi-valiolone epimerase (183 aa).

One can recognise a VOC domain in the interval 11 to 155 (AVHHVAYTVP…WGMQLELINL (145 aa)). The a divalent metal cation site is built by H14, E76, H99, and E151.

As to quaternary structure, homodimer. A divalent metal cation serves as cofactor.

It catalyses the reaction 2-epi-5-epi-valiolone = 5-epi-valiolone. The protein operates within antibiotic biosynthesis. Its function is as follows. Catalyzes the epimerization of 2-epi-5-epi-valiolone to 5-epi-valiolone. Involved in cetoniacytone A biosynthesis. The sequence is that of 2-epi-5-epi-valiolone epimerase from Actinomyces sp.